Consider the following 435-residue polypeptide: Transmembrane protein 130 (435 aa).

A signal peptide spans 1–24; sequence MAQAVWSRLGRILWLACLLPWAPA. Over 25-339 the chain is Extracellular; it reads GVAAGLYELN…IQVWPSRIQP (315 aa). Residues N34, N197, and N300 are each glycosylated (N-linked (GlcNAc...) asparagine). A PKD domain is found at 147–233; the sequence is WPSSYLTKTV…AVKQKTGDFS (87 aa). A helical membrane pass occupies residues 340–360; sequence AVFAFPCATLITVMLAFIMYM. The Cytoplasmic portion of the chain corresponds to 361–435; that stretch reads TLRNATQQKD…LYKSVKTYTV (75 aa).

It localises to the golgi apparatus membrane. In Homo sapiens (Human), this protein is Transmembrane protein 130 (TMEM130).